We begin with the raw amino-acid sequence, 178 residues long: Large ribosomal subunit protein bL17 (178 aa).

The segment covering 126-139 has biased composition (basic and acidic residues); sequence DRARRVAASKKAEE. The interval 126 to 178 is disordered; the sequence is DRARRVAASKKAEEQAPAAEAEEQAPAAEAEAPAADAAAEAKADEAAEDKKDA. The segment covering 140-163 has biased composition (low complexity); the sequence is QAPAAEAEEQAPAAEAEAPAADAA. The segment covering 164 to 178 has biased composition (basic and acidic residues); the sequence is AEAKADEAAEDKKDA.

Belongs to the bacterial ribosomal protein bL17 family. Part of the 50S ribosomal subunit. Contacts protein L32.

The sequence is that of Large ribosomal subunit protein bL17 from Nocardia farcinica (strain IFM 10152).